The sequence spans 184 residues: Photosystem I assembly protein Ycf4 (184 aa).

A run of 2 helical transmembrane segments spans residues 22-42 and 57-77; these read FCWA…GISS and IIFF…LFIS.

Belongs to the Ycf4 family.

Its subcellular location is the plastid. The protein resides in the chloroplast thylakoid membrane. In terms of biological role, seems to be required for the assembly of the photosystem I complex. This chain is Photosystem I assembly protein Ycf4, found in Ipomoea purpurea (Common morning glory).